The sequence spans 258 residues: Acidic leucine-rich nuclear phosphoprotein 32 family member E (258 aa).

Met1 is modified (N-acetylmethionine). LRR repeat units follow at residues 18–38 (EVTE…EGLN), 43–64 (ELEF…PSLN), 65–87 (KLRK…AEKC), and 89–110 (NLTY…EALQ). A Glycyl lysine isopeptide (Lys-Gly) (interchain with G-Cter in SUMO2) cross-link involves residue Lys68. An LRRCT domain is found at 123–161 (CEITNLEDYRESIFELLQQITYLDGFDQEDNEAPDSEEE). 2 stretches are compositionally biased toward acidic residues: residues 149 to 206 (DQED…EEEV) and 216 to 238 (IQDE…EEEE). A disordered region spans residues 149-258 (DQEDNEAPDS…AEDDGEEDDD (110 aa)). The interval 205–258 (EVGLSYLMKEEIQDEEDDDDYVDEGEEEEEEEEEGPRGEKRKRDAEDDGEEDDD) is ZID domain. A compositionally biased stretch (basic and acidic residues) spans 239–249 (GPRGEKRKRDA).

It belongs to the ANP32 family. Component of a SWR1-like complex, composed of EP400, KAT5/TIP60, TRRAP, BRD8, RUVBL1, RUVBL2, ING3 and ANP32E; the complex does not contain SRCAP. Interacts with H2A.Z/H2AZ1. Interacts with the importin alpha KPNA1 and KPNA2. Phosphorylated. The phosphorylation is nuclear localization signal (NLS)-dependent.

It localises to the cytoplasm. The protein resides in the nucleus. Functionally, histone chaperone that specifically mediates the genome-wide removal of histone H2A.Z/H2AZ1 from the nucleosome: removes H2A.Z/H2AZ1 from its normal sites of deposition, especially from enhancer and insulator regions. Not involved in deposition of H2A.Z/H2AZ1 in the nucleosome. May stabilize the evicted H2A.Z/H2AZ1-H2B dimer, thus shifting the equilibrium towards dissociation and the off-chromatin state. Inhibits activity of protein phosphatase 2A (PP2A). Does not inhibit protein phosphatase 1. May play a role in cerebellar development and synaptogenesis. This chain is Acidic leucine-rich nuclear phosphoprotein 32 family member E (Anp32e), found in Rattus norvegicus (Rat).